Consider the following 581-residue polypeptide: MSGTDLVSELSARFGDAVLGEQITRERFPTVWIRPEASAAVHRFLKHEVDRPFRMLVDLWAIDETARKHREGQPPSGITIASHLMSHERNADIRLKIALDAEYPSTKSIAGVFPNAAWYEREAYDMFGVEFELQPHSQRILLPPGWEGHPMRKTQPGRATERPLFNMTAALFDAKEHALAADPEKFGLPTHRDGVELMILNYGPHSMATHGVFRIVLALDGEEIVAARPDIGFHHRGAEKMAERQTWHSFLPYTDRVDYLGGVMGEMPYLQAVEKACGITVPDRALMVRVMLSEIFRIMNHLLFYGTMAQDTGAMSPVFYMFVDRERAYRVIESITGARMHPGFFRIGGLSMDLPQGWDGLVREFLDWMPSRLDDYEGMVLRNEIFRARTKGVGAYDTAMALDWGVTGPGLRATGYAWDVRKARPYAGFENFDFEIPVGVNGDCFDRTVVRVEEIRQSLKIIRQCVDNMPSGPIKADHPLTTPPPRERMLHDIETMIHHFVGASWGPVLPAGEYTGQVETVRGLTQFALISDGEPSSYRTRIRTPSFAHLQMISAVAPGMMVADLVAFLGSIDYVMSDVDR.

Positions 1–172 are NADH dehydrogenase I subunit C; that stretch reads MSGTDLVSEL…PLFNMTAALF (172 aa). Positions 196–581 are NADH dehydrogenase I subunit D; that stretch reads ELMILNYGPH…IDYVMSDVDR (386 aa).

In the N-terminal section; belongs to the complex I 30 kDa subunit family. This sequence in the C-terminal section; belongs to the complex I 49 kDa subunit family. NDH-1 is composed of 13 different subunits. Subunits NuoB, CD, E, F, and G constitute the peripheral sector of the complex.

The protein localises to the cell inner membrane. It carries out the reaction a quinone + NADH + 5 H(+)(in) = a quinol + NAD(+) + 4 H(+)(out). NDH-1 shuttles electrons from NADH, via FMN and iron-sulfur (Fe-S) centers, to quinones in the respiratory chain. The immediate electron acceptor for the enzyme in this species is believed to be ubiquinone. Couples the redox reaction to proton translocation (for every two electrons transferred, four hydrogen ions are translocated across the cytoplasmic membrane), and thus conserves the redox energy in a proton gradient. The polypeptide is NADH-quinone oxidoreductase subunit C/D (Rhodopseudomonas palustris (strain BisB5)).